The sequence spans 351 residues: Alanine racemase (351 aa).

The active-site Proton acceptor; specific for D-alanine is the Lys34. Lys34 carries the post-translational modification N6-(pyridoxal phosphate)lysine. Arg126 contacts substrate. The Proton acceptor; specific for L-alanine role is filled by Tyr248. Substrate is bound at residue Met296.

This sequence belongs to the alanine racemase family. Pyridoxal 5'-phosphate serves as cofactor.

The enzyme catalyses L-alanine = D-alanine. Its pathway is amino-acid biosynthesis; D-alanine biosynthesis; D-alanine from L-alanine: step 1/1. Its function is as follows. Catalyzes the interconversion of L-alanine and D-alanine. May also act on other amino acids. The protein is Alanine racemase (alr) of Deinococcus radiodurans (strain ATCC 13939 / DSM 20539 / JCM 16871 / CCUG 27074 / LMG 4051 / NBRC 15346 / NCIMB 9279 / VKM B-1422 / R1).